Consider the following 383-residue polypeptide: Homeobox protein knotted-1-like 5 (383 aa).

2 disordered regions span residues 1–35 and 52–73; these read MSFN…HFSE and TTAD…ADTN. The ELK domain maps to 281-301; sequence ELKHELKQGFKEKIVDIREEI. The homeobox; TALE-type DNA-binding region spans 302–365; that stretch reads MRKRRAGKLP…NQRKRNWNSN (64 aa). Residues 361–383 are disordered; that stretch reads NWNSNSSTSSTLTKNKRKRTGKS. The span at 362-373 shows a compositional bias: low complexity; it reads WNSNSSTSSTLT. Positions 374–383 are enriched in basic residues; sequence KNKRKRTGKS.

This sequence belongs to the TALE/KNOX homeobox family. In terms of assembly, may form heterodimeric complex with the TALE/BELL protein BEL1, BLH1 and BLH2. Interacts with OFP1, OFP2, OFP3 and OFP4.

It localises to the nucleus. The chain is Homeobox protein knotted-1-like 5 (KNAT5) from Arabidopsis thaliana (Mouse-ear cress).